The sequence spans 468 residues: H(+)/Cl(-) exchange transporter ClcA (468 aa).

Residues Met-1–Pro-30 are Cytoplasmic-facing. The helical transmembrane segment at Phe-31–Lys-67 threads the bilayer. Topologically, residues Ser-68–Leu-74 are periplasmic. A helical transmembrane segment spans residues Pro-75–Phe-98. A Selectivity filter part_1 motif is present at residues Gly-104 to Pro-108. Ser-105 contacts chloride. An intramembrane region (helical) is located at residues Ile-107–Met-114. Residues Asp-115–Arg-121 lie on the Cytoplasmic side of the membrane. The next 2 helical transmembrane spans lie at Trp-122 to Ser-139 and Glu-146 to Phe-164. The short motif at Gly-144–Pro-148 is the Selectivity filter part_2 element. Residues Arg-165–Ser-174 are Cytoplasmic-facing. 2 consecutive intramembrane regions (helical) follow at residues Leu-175 to Ala-187 and Pro-191 to Ile-199. Residues Glu-200–Ser-212 are Cytoplasmic-facing. The chain crosses the membrane as a helical span at residues Val-213–Ile-230. Topologically, residues Asn-231–Leu-250 are periplasmic. The helical transmembrane segment at Gly-251–Val-279 threads the bilayer. Over Lys-280–Asp-285 the chain is Cytoplasmic. A helical membrane pass occupies residues Arg-286–Val-307. At Pro-308 to Gly-327 the chain is on the periplasmic side. 2 consecutive transmembrane segments (helical) span residues Ala-328–Gly-347 and Gly-353–Lys-374. The Selectivity filter part_3 motif lies at Gly-353–Pro-357. Chloride is bound by residues Ile-354 and Phe-355. Residues Met-375–Pro-384 lie on the Periplasmic side of the membrane. An intramembrane region (helical) is located at residues Gly-385–Thr-399. The segment at residues Val-400–Ala-402 is an intramembrane region (note=Loop between two helices). Positions Pro-403–Thr-414 form an intramembrane region, helical. Residues Asn-415 to Leu-419 constitute an intramembrane region (note=Loop between two helices). Residues Ile-420 to Leu-436 traverse the membrane as a helical segment. At Leu-437–Ser-468 the chain is on the cytoplasmic side. A chloride-binding site is contributed by Tyr-443.

This sequence belongs to the chloride channel (TC 2.A.49) family. ClcA subfamily. In terms of assembly, homodimer.

The protein localises to the cell inner membrane. The enzyme catalyses 2 chloride(in) + H(+)(out) = 2 chloride(out) + H(+)(in). In terms of biological role, proton-coupled chloride transporter. Functions as antiport system and exchanges two chloride ions for 1 proton. Probably acts as an electrical shunt for an outwardly-directed proton pump that is linked to amino acid decarboxylation, as part of the extreme acid resistance (XAR) response. The chain is H(+)/Cl(-) exchange transporter ClcA from Vibrio cholerae serotype O1 (strain ATCC 39315 / El Tor Inaba N16961).